A 130-amino-acid chain; its full sequence is Small ribosomal subunit protein uS9 (130 aa).

The interval 99–130 (KSAGMLTRDPRMKERKKPGLKKARKASQFSKR) is disordered. Residues 111 to 130 (KERKKPGLKKARKASQFSKR) show a composition bias toward basic residues.

It belongs to the universal ribosomal protein uS9 family.

This chain is Small ribosomal subunit protein uS9, found in Latilactobacillus sakei subsp. sakei (strain 23K) (Lactobacillus sakei subsp. sakei).